The primary structure comprises 717 residues: Ferric reduction oxidase 3, mitochondrial (717 aa).

The transit peptide at 1–23 directs the protein to the mitochondrion; that stretch reads MAARGRLVVARGNRSFSSIIRKY. Transmembrane regions (helical) follow at residues 40–59, 86–104, 140–163, 232–255, 306–330, and 353–373; these read LLTMVILMGTVVIWIMMPTS, LLVYMFPMILLASLGSIYL, LGIVTVTEVMFLMMFMALLLWSLA, YHIWLGNLVMTLFTSHGLCYCIYW, THYLYMVFMLFFVFHVGISYALISF, and LVSARVLPCETVELNFSKNPM. One can recognise a Ferric oxidoreductase domain in the interval 198 to 317; sequence GLTGNICLGF…YLYMVFMLFF (120 aa). Residues H233, H247, H307, and H320 each coordinate heme. In terms of domain architecture, FAD-binding FR-type spans 346-451; the sequence is QSRNNVKLVS…EGPYGPASTD (106 aa). 395 to 398 provides a ligand contact to FAD; sequence HPFT. 443–446 contributes to the NAD(+) binding site; it reads GPYG. 2 helical membrane-spanning segments follow: residues 564 to 586 and 606 to 627; these read WLWLATILSSSFMIFIIIIAIIS and SLIYLLAISISVVATSTVAMLC.

It belongs to the ferric reductase (FRE) family. It depends on FAD as a cofactor. As to expression, expressed in root steele. Detected in shoots, leaves, stems, siliques, flowers and cotyledons.

It localises to the mitochondrion membrane. It carries out the reaction 2 a Fe(II)-siderophore + NAD(+) + H(+) = 2 a Fe(III)-siderophore + NADH. In terms of biological role, ferric chelate reductase involved in iron reduction in roots. May participate in the transport of electrons to a Fe(3+) ion via FAD and heme intermediates. This Arabidopsis thaliana (Mouse-ear cress) protein is Ferric reduction oxidase 3, mitochondrial (FRO3).